The chain runs to 899 residues: Probable disease resistance protein RXW24L (899 aa).

Positions aspartate 13–lysine 50 form a coiled coil. Residues leucine 143–tyrosine 455 form the NB-ARC domain. Glycine 189–threonine 196 contributes to the ATP binding site.

It belongs to the disease resistance NB-LRR family.

Its function is as follows. Potential disease resistance protein. The sequence is that of Probable disease resistance protein RXW24L (RXW24L) from Arabidopsis thaliana (Mouse-ear cress).